The chain runs to 209 residues: MADS-box transcription factor 2 (209 aa).

The region spanning Met-1 to Lys-61 is the MADS-box domain. Positions His-84–Ala-170 constitute a K-box domain.

As to expression, highly expressed in anthers and carpels. Expressed in pollen, tapetum and stigma.

Its subcellular location is the nucleus. Its function is as follows. Probable transcription factor involved in the development of floral organs. B-class protein required for normal development of lodicules (whorl 2). This is MADS-box transcription factor 2 (MADS2) from Oryza sativa subsp. japonica (Rice).